The sequence spans 301 residues: Ubiquitin thioesterase OTU1 (301 aa).

Residues R5–K83 are UBX-like. Positions V102–V227 constitute an OTU domain. The segment at V107–C113 is cys-loop. D110 is a catalytic residue. C113 serves as the catalytic Nucleophile. A variable-loop region spans residues I166–I176. The interval Y216 to H220 is his-loop. Substrate is bound at residue I219. H220 is an active-site residue. An S2 site region spans residues D244–Q249. The C2H2-type zinc-finger motif lies at L271–H295. H295 is a catalytic residue.

Its subcellular location is the cytoplasm. The enzyme catalyses Thiol-dependent hydrolysis of ester, thioester, amide, peptide and isopeptide bonds formed by the C-terminal Gly of ubiquitin (a 76-residue protein attached to proteins as an intracellular targeting signal).. Its function is as follows. Hydrolase that can remove conjugated ubiquitin from proteins and participates in endoplasmic reticulum-associated degradation (ERAD) for misfolded lumenal proteins. May act by triming the ubiquitin chain on the associated substrate to facilitate their threading through the VCP/p97 pore. Ubiquitin moieties on substrates may present a steric impediment to the threading process when the substrate is transferred to the VCP pore and threaded through VCP's axial channel. Mediates deubiquitination of 'Lys-27'-, 'Lys-29'- and 'Lys-33'-linked polyubiquitin chains. Also able to hydrolyze 'Lys-11'-linked ubiquitin chains. Cleaves both polyubiquitin and di-ubiquitin. The sequence is that of Ubiquitin thioesterase OTU1 (yod1) from Danio rerio (Zebrafish).